Here is a 276-residue protein sequence, read N- to C-terminus: Large ribosomal subunit protein uL2 (276 aa).

Disordered regions lie at residues 36–55 (PLPR…RHRG) and 219–276 (TVRG…GRKK). Basic residues predominate over residues 255 to 276 (LGKKTRKKKNRSNKLIVRGRKK).

This sequence belongs to the universal ribosomal protein uL2 family. In terms of assembly, part of the 50S ribosomal subunit. Forms a bridge to the 30S subunit in the 70S ribosome.

In terms of biological role, one of the primary rRNA binding proteins. Required for association of the 30S and 50S subunits to form the 70S ribosome, for tRNA binding and peptide bond formation. It has been suggested to have peptidyltransferase activity; this is somewhat controversial. Makes several contacts with the 16S rRNA in the 70S ribosome. The chain is Large ribosomal subunit protein uL2 from Macrococcus caseolyticus (strain JCSC5402) (Macrococcoides caseolyticum).